The primary structure comprises 293 residues: Pyridoxal 5'-phosphate synthase subunit PdxS (293 aa).

Asp23 provides a ligand contact to D-ribose 5-phosphate. Lys80 (schiff-base intermediate with D-ribose 5-phosphate) is an active-site residue. Residue Gly152 coordinates D-ribose 5-phosphate. Arg164 contributes to the D-glyceraldehyde 3-phosphate binding site. Residues Gly213 and 234 to 235 (GS) contribute to the D-ribose 5-phosphate site.

The protein belongs to the PdxS/SNZ family. In the presence of PdxT, forms a dodecamer of heterodimers.

The catalysed reaction is aldehydo-D-ribose 5-phosphate + D-glyceraldehyde 3-phosphate + L-glutamine = pyridoxal 5'-phosphate + L-glutamate + phosphate + 3 H2O + H(+). Its pathway is cofactor biosynthesis; pyridoxal 5'-phosphate biosynthesis. Its function is as follows. Catalyzes the formation of pyridoxal 5'-phosphate from ribose 5-phosphate (RBP), glyceraldehyde 3-phosphate (G3P) and ammonia. The ammonia is provided by the PdxT subunit. Can also use ribulose 5-phosphate and dihydroxyacetone phosphate as substrates, resulting from enzyme-catalyzed isomerization of RBP and G3P, respectively. This is Pyridoxal 5'-phosphate synthase subunit PdxS from Syntrophus aciditrophicus (strain SB).